Here is a 473-residue protein sequence, read N- to C-terminus: Serine/threonine-protein phosphatase 2A activator 1 (473 aa).

Residues 360 to 473 form a disordered region; the sequence is NAVPPPTSAH…HVPTKAPWAK (114 aa). Positions 368–378 are enriched in polar residues; it reads AHMSTTQSQSR. Residues 395 to 416 are compositionally biased toward low complexity; the sequence is APWATATQAAPPAGAGTAAPWA.

The protein belongs to the PTPA-type PPIase family.

It localises to the cytoplasm. The protein localises to the nucleus. The enzyme catalyses [protein]-peptidylproline (omega=180) = [protein]-peptidylproline (omega=0). Its function is as follows. PPIases accelerate the folding of proteins. It catalyzes the cis-trans isomerization of proline imidic peptide bonds in oligopeptides. Acts as a regulatory subunit for PP2A-like phosphatases modulating their activity or substrate specificity, probably by inducing a conformational change in the catalytic subunit, a direct target of the PPIase. Can reactivate inactive phosphatase PP2A-phosphatase methylesterase complexes (PP2Ai) in presence of ATP and Mg(2+) by dissociating the inactive form from the complex. This chain is Serine/threonine-protein phosphatase 2A activator 1 (rrd1), found in Aspergillus fumigatus (strain ATCC MYA-4609 / CBS 101355 / FGSC A1100 / Af293) (Neosartorya fumigata).